Here is a 58-residue protein sequence, read N- to C-terminus: Small ribosomal subunit protein bS21 (58 aa).

The segment covering 32–42 (ARRREHYEKPS) has biased composition (basic and acidic residues). The segment at 32-58 (ARRREHYEKPSVRRKKKSEAARKRRWH) is disordered. Residues 43-58 (VRRKKKSEAARKRRWH) are compositionally biased toward basic residues.

This sequence belongs to the bacterial ribosomal protein bS21 family.

The sequence is that of Small ribosomal subunit protein bS21 from Moorella thermoacetica (strain ATCC 39073 / JCM 9320).